We begin with the raw amino-acid sequence, 616 residues long: Chaperone protein HscA (616 aa).

This sequence belongs to the heat shock protein 70 family.

Chaperone involved in the maturation of iron-sulfur cluster-containing proteins. Has a low intrinsic ATPase activity which is markedly stimulated by HscB. Involved in the maturation of IscU. This chain is Chaperone protein HscA, found in Escherichia coli O17:K52:H18 (strain UMN026 / ExPEC).